The sequence spans 300 residues: Acyl-CoA-binding domain-containing protein 6 (300 aa).

A compositionally biased stretch (low complexity) spans 1–19 (MASRSPSSSPDSATGSGTD). Positions 1-43 (MASRSPSSSPDSATGSGTDPARPDTGEPLGGGSDSDSDFGLGK) are disordered. Positions 60–145 (LENEFESAAD…VHALDPEGSQ (86 aa)) constitute an ACB domain. Residues 87-91 (YARFK), Lys113, and Tyr132 each bind an acyl-CoA. Residues 142–162 (EGSQKSSERRGGEKRTGFGGP) form a disordered region. Residues 147–157 (SSERRGGEKRT) are compositionally biased toward basic and acidic residues. 2 ANK repeats span residues 209–238 (EGRA…DINS) and 242–271 (EGQT…DPSI). Residues 270 to 300 (SIKDQEGSLPEEVTESSAISSLLRQYTAPKG) are disordered. A compositionally biased stretch (polar residues) spans 284–293 (ESSAISSLLR).

Higly expressed in the central nervous system, developing eyes, otic vesicle, and trunk muscles.

Its subcellular location is the cytoplasm. It localises to the nucleus. Binds long-chain acyl-coenzyme A molecules with a strong preference for unsaturated C18:1-CoA. Does not bind fatty acids. Plays a role in protein N-myristoylation. The protein is Acyl-CoA-binding domain-containing protein 6 (acbd6) of Danio rerio (Zebrafish).